The chain runs to 321 residues: L-carnitine dehydrogenase (321 aa).

14-19 (GAGVIG) contributes to the NAD(+) binding site.

This sequence belongs to the 3-hydroxyacyl-CoA dehydrogenase family. L-carnitine dehydrogenase subfamily. In terms of assembly, homodimer.

It localises to the cytoplasm. It catalyses the reaction carnitine + NAD(+) = 3-dehydrocarnitine + NADH + H(+). Its pathway is amine and polyamine metabolism; carnitine metabolism. Its function is as follows. Catalyzes the NAD(+)-dependent oxidation of L-carnitine to 3-dehydrocarnitine. The protein is L-carnitine dehydrogenase of Burkholderia mallei (strain ATCC 23344).